A 374-amino-acid polypeptide reads, in one-letter code: Transcription factor IIIA (374 aa).

7 C2H2-type zinc fingers span residues 23–47, 53–77, 83–107, 113–138, 144–169, 204–226, and 236–261; these read FHCPYEECGKKYSRPSLLEQHLRTH, FVCDYTGCSKAFYRKSHLKIHKRCH, FSCHYDGCDAQFYTQQHLERHIEVH, YACTWEGCDECFSKHQQLRSHISACH, YPCTYQDCELRFATKQKLQNHVNRAH, PSCSICGRQFKTAAHLRHHVVLH, and YHCPMEGCKKSFTRSSALKKHISVIH. A C2H2-type 8; atypical zinc finger spans residues 267–291; the sequence is FHCDSCGTKFGYKHMLQRHLERGTC. The C2H2-type 9 zinc-finger motif lies at 349–374; that stretch reads YSCSFPECNYRFKRLYDMHRHLNSHH.

The protein resides in the nucleus. In terms of biological role, is required for correct transcription of 5S RNA genes by RNA polymerase III. Also binds the transcribed 5S RNA's. Initiates transcription of the 5S ribosomal RNA gene. In Schizosaccharomyces pombe (strain 972 / ATCC 24843) (Fission yeast), this protein is Transcription factor IIIA (sfc2).